We begin with the raw amino-acid sequence, 320 residues long: MKRIGILTSGGDAPGMNAAIRAVTKTAIHHGLEVFGIRYGFAGLVAGDFVPLTTENVDHKISEGGTFLYSARFPEFAQEEVQQKGVEQLKKHGIDAVIVIGGDGSYHGALALTRHGVNSVGLPGTIDNDIPYTDYTIGFDSACRTAMDAIDKIRDTASSHHRVFVVNVMGRECGDIAMRVGVASGADAIVIPERPYDVKEIAETITRGFADGKDHGIIVLAEGVMTADKFKDELLKYGDFDARANVLAHMQRGGSPTVTDRVNATKMGNYAVKLLLDGKGGLAVGMENGQLSTHDILDLFDGKHHGDYALLDVNEEMTKY.

Gly-11 is an ATP binding site. Residue 21–25 (RAVTK) coordinates ADP. ATP is bound by residues 72–73 (RF) and 102–105 (GDGS). Asp-103 contributes to the Mg(2+) binding site. 125-127 (TID) serves as a coordination point for substrate. The Proton acceptor role is filled by Asp-127. Arg-154 provides a ligand contact to ADP. Residues Arg-162 and 169-171 (MGR) contribute to the substrate site. ADP contacts are provided by residues 185–187 (GAD) and 213–215 (KDH). Residues Glu-222, Arg-243, and 249 to 252 (HMQR) contribute to the substrate site.

Belongs to the phosphofructokinase type A (PFKA) family. ATP-dependent PFK group I subfamily. Prokaryotic clade 'B1' sub-subfamily. As to quaternary structure, homotetramer. It depends on Mg(2+) as a cofactor.

It is found in the cytoplasm. The catalysed reaction is beta-D-fructose 6-phosphate + ATP = beta-D-fructose 1,6-bisphosphate + ADP + H(+). It participates in carbohydrate degradation; glycolysis; D-glyceraldehyde 3-phosphate and glycerone phosphate from D-glucose: step 3/4. Allosterically activated by ADP and other diphosphonucleosides, and allosterically inhibited by phosphoenolpyruvate. Catalyzes the phosphorylation of D-fructose 6-phosphate to fructose 1,6-bisphosphate by ATP, the first committing step of glycolysis. This Lactobacillus helveticus (strain DPC 4571) protein is ATP-dependent 6-phosphofructokinase.